The primary structure comprises 107 residues: Ig kappa chain V-VI region SAPC 10 (107 aa).

Residues 1-23 are framework-1; the sequence is EIVLTQSPAITAASLGQKVTITC. C23 and C87 form a disulfide bridge. Residues 24-33 form a complementarity-determining-1 region; it reads SASSSVSYMH. The interval 34–48 is framework-2; the sequence is WYQQKSGTSPKPWIY. The complementarity-determining-2 stretch occupies residues 49–55; the sequence is EISKLAS. The interval 56–87 is framework-3; that stretch reads GVPARFSGSGSGTSYSLTISSMEAEDAAIYYC. The interval 88 to 96 is complementarity-determining-3; that stretch reads QQWNYPLIT. The interval 97–106 is framework-4; the sequence is FGGGTKLEIK.

This is Ig kappa chain V-VI region SAPC 10 from Mus musculus (Mouse).